The sequence spans 228 residues: Claudin-10 (228 aa).

A helical membrane pass occupies residues 1–21; that stretch reads MASTASEIIAFMVSISGWVLV. Residues 22-80 lie on the Extracellular side of the membrane; it reads SSTLPTDYWKVSTIDGTVITTATYWANLWKACVTDSTGVSNCKDFPSMLALDGYIQACR. Residues 81 to 101 form a helical membrane-spanning segment; the sequence is GLMIAAVSLGFFGSIFALFGM. At 102–115 the chain is on the cytoplasmic side; sequence KCTKVGGSDKAKAK. The chain crosses the membrane as a helical span at residues 116–136; it reads IACLAGIVFILSGLCSMTGCS. Over 137–160 the chain is Extracellular; it reads LYANKITTEFFDPLFVEQKYELGA. Residues 161 to 181 form a helical membrane-spanning segment; sequence ALFIGWAGASLCIIGGVIFCF. Over 182 to 228 the chain is Cytoplasmic; that stretch reads SISDNNKTPRYTYNGATSVMSSRTKYHGGEDFKTTNPSKQFDKNAYV.

Belongs to the claudin family. In terms of assembly, can form homodimers both in trans (interaction between CLDN10 molecules in opposing membranes) and in cis (interaction between CLDN10 molecules within one membrane). As to quaternary structure, interacts with CLDN19. In terms of tissue distribution, expressed in the kidney, eccrine sweat glands and in all layers of the epidermis. In the kidney, it is detected in the thick ascending limb of Henle's loop (TAL). In the sweat glands, it is expressed in cells from secretory portions, corresponding to the clear cells.

The protein localises to the cell junction. It localises to the tight junction. The protein resides in the cell membrane. It carries out the reaction Na(+)(in) = Na(+)(out). The catalysed reaction is Li(+)(in) = Li(+)(out). The enzyme catalyses K(+)(in) = K(+)(out). It catalyses the reaction Rb(+)(in) = Rb(+)(out). It carries out the reaction Cs(+)(in) = Cs(+)(out). The catalysed reaction is NH4(+)(in) = NH4(+)(out). The enzyme catalyses methylamine(out) = methylamine(in). It catalyses the reaction Mg(2+)(in) = Mg(2+)(out). It carries out the reaction Ca(2+)(in) = Ca(2+)(out). The catalysed reaction is Sr(2+)(in) = Sr(2+)(out). The enzyme catalyses chloride(in) = chloride(out). It catalyses the reaction nitrate(in) = nitrate(out). Forms paracellular channels: polymerizes in tight junction strands with cation- and anion-selective channels through the strands, conveying epithelial permeability in a process known as paracellular tight junction permeability. Its function is as follows. Forms cation-selective paracellular channels. In sweat glands and in the thick ascending limb (TAL) of Henle's loop in kidney, it controls paracellular sodium permeability which is essential for proper sweat production and renal function. Functionally, forms anion-selective paracellular channels. In renal proximal tubules, it conveys selective chloride over hydrogencarbonate anion permeability which is required for renal chloride reabsorption and salt homeostasis. This Homo sapiens (Human) protein is Claudin-10.